Reading from the N-terminus, the 399-residue chain is N-acetylglucosamine-6-phosphate deacetylase (399 aa).

Residues His65, His67, and Glu135 each contribute to the a divalent metal cation site. Residue 146–147 (AH) coordinates substrate. His201 and His222 together coordinate a divalent metal cation. Substrate is bound by residues 225–226 (NG), Arg233, and 254–257 (DGHH). Asp279 contacts a divalent metal cation. Residue Asp279 is the Proton donor/acceptor of the active site. 312-314 (LAG) contributes to the substrate binding site.

The protein belongs to the metallo-dependent hydrolases superfamily. NagA family. As to quaternary structure, homodimer. The cofactor is a divalent metal cation.

The enzyme catalyses N-acetyl-D-glucosamine 6-phosphate + H2O = D-glucosamine 6-phosphate + acetate. It participates in amino-sugar metabolism; N-acetylneuraminate degradation; D-fructose 6-phosphate from N-acetylneuraminate: step 4/5. In terms of biological role, involved in the first committed step in the biosynthesis of amino-sugar-nucleotides. Catalyzes the hydrolysis of the N-acetyl group of N-acetylglucosamine-6-phosphate (GlcNAc-6-P) to yield glucosamine 6-phosphate and acetate. The protein is N-acetylglucosamine-6-phosphate deacetylase (manD) of Vibrio furnissii.